We begin with the raw amino-acid sequence, 691 residues long: Elongation factor G (691 aa).

One can recognise a tr-type G domain in the interval 8–282; the sequence is ERVRNIGIAA…AVVDYLPAPV (275 aa). GTP contacts are provided by residues 17 to 24, 81 to 85, and 135 to 138; these read AHIDAGKT, DTPGH, and NKMD.

The protein belongs to the TRAFAC class translation factor GTPase superfamily. Classic translation factor GTPase family. EF-G/EF-2 subfamily.

It is found in the cytoplasm. Its function is as follows. Catalyzes the GTP-dependent ribosomal translocation step during translation elongation. During this step, the ribosome changes from the pre-translocational (PRE) to the post-translocational (POST) state as the newly formed A-site-bound peptidyl-tRNA and P-site-bound deacylated tRNA move to the P and E sites, respectively. Catalyzes the coordinated movement of the two tRNA molecules, the mRNA and conformational changes in the ribosome. This Prochlorococcus marinus (strain AS9601) protein is Elongation factor G.